We begin with the raw amino-acid sequence, 180 residues long: Putative adenylate kinase (180 aa).

5 residues coordinate ATP: Gly10, Gly12, Lys13, Thr14, and Thr15. The NMP stretch occupies residues 30-50 (SVKELALSRGIGERVSDEIEI). Positions 99–109 (ARGYSKKKLAE) are LID. Residues Arg100 and Lys138 each contribute to the ATP site.

This sequence belongs to the adenylate kinase family. AK6 subfamily. As to quaternary structure, interacts with uS11. Not a structural component of 40S pre-ribosomes, but transiently interacts with them by binding to uS11.

The enzyme catalyses AMP + ATP = 2 ADP. It carries out the reaction ATP + H2O = ADP + phosphate + H(+). Functionally, broad-specificity nucleoside monophosphate (NMP) kinase that catalyzes the reversible transfer of the terminal phosphate group between nucleoside triphosphates and monophosphates. Also has ATPase activity. Involved in the late maturation steps of the 30S ribosomal particles, specifically 16S rRNA maturation. While NMP activity is not required for ribosome maturation, ATPase activity is. Associates transiently with small ribosomal subunit protein uS11. ATP hydrolysis breaks the interaction with uS11. May temporarily remove uS11 from the ribosome to enable a conformational change of the ribosomal RNA that is needed for the final maturation step of the small ribosomal subunit. This is Putative adenylate kinase from Thermococcus onnurineus (strain NA1).